Consider the following 163-residue polypeptide: ADP-ribosylation factor-like protein 2-binding protein (163 aa).

This sequence belongs to the ARL2BP family. In terms of assembly, interacts with GTP bound ARL2 and ARL3; the complex ARL2-ARL2BP as well as ARL2BP alone, binds to SLC25A4/ANT1. Interaction with ARL2 may be required for targeting to cilia basal body. Interacts with STAT3; interaction is enhanced with ARL2. Found in a complex with ARL2, ARL2BP and SLC25A4. Interacts with STAT2, STAT3 and STAT4. Found in a complex with ARL2BP, ARL2 and SLC25A6. Expressed in brain.

The protein resides in the cytoplasm. The protein localises to the mitochondrion intermembrane space. Its subcellular location is the cytoskeleton. It is found in the microtubule organizing center. It localises to the centrosome. The protein resides in the nucleus. The protein localises to the spindle. Its subcellular location is the cilium basal body. Its function is as follows. Together with ARL2, plays a role in the nuclear translocation, retention and transcriptional activity of STAT3. May play a role as an effector of ARL2. This Bos taurus (Bovine) protein is ADP-ribosylation factor-like protein 2-binding protein (ARL2BP).